A 118-amino-acid chain; its full sequence is Fluoride-specific ion channel FluC 2 (118 aa).

4 consecutive transmembrane segments (helical) span residues 1–21 (MIEA…RFAI), 33–53 (FPLA…YIIG), 55–75 (GVTT…FTTF), and 91–111 (ISTF…FAFL). 2 residues coordinate Na(+): Gly-70 and Thr-73.

The protein belongs to the fluoride channel Fluc/FEX (TC 1.A.43) family.

The protein localises to the cell membrane. It catalyses the reaction fluoride(in) = fluoride(out). Its activity is regulated as follows. Na(+) is not transported, but it plays an essential structural role and its presence is essential for fluoride channel function. In terms of biological role, fluoride-specific ion channel. Important for reducing fluoride concentration in the cell, thus reducing its toxicity. The chain is Fluoride-specific ion channel FluC 2 from Bacillus cereus (strain ATCC 14579 / DSM 31 / CCUG 7414 / JCM 2152 / NBRC 15305 / NCIMB 9373 / NCTC 2599 / NRRL B-3711).